The chain runs to 510 residues: Serine carboxypeptidase-like 48 (510 aa).

An N-terminal signal peptide occupies residues 1–25 (MDSKTTFLTFLLCIFIFSHFSPSTS). Disulfide bonds link Cys141–Cys383, Cys309–Cys326, and Cys349–Cys354. Asn158 and Asn159 each carry an N-linked (GlcNAc...) asparagine glycan. The active site involves Ser231. Catalysis depends on residues Asp421 and His478.

The protein belongs to the peptidase S10 family. In terms of tissue distribution, ubiquitous.

The protein resides in the secreted. Functionally, probable carboxypeptidase. The chain is Serine carboxypeptidase-like 48 (SCPL48) from Arabidopsis thaliana (Mouse-ear cress).